The chain runs to 256 residues: Alcohol dehydrogenase (256 aa).

F12–L35 provides a ligand contact to NAD(+). S140 is a binding site for substrate. Y153 functions as the Proton acceptor in the catalytic mechanism.

Belongs to the short-chain dehydrogenases/reductases (SDR) family. In terms of assembly, homodimer.

The catalysed reaction is a primary alcohol + NAD(+) = an aldehyde + NADH + H(+). It carries out the reaction a secondary alcohol + NAD(+) = a ketone + NADH + H(+). This Zaprionus tuberculatus (Vinegar fly) protein is Alcohol dehydrogenase (Adh).